The following is a 255-amino-acid chain: MRHPLVMGNWKLNGSRHMVHELVSNLRKELAGVAGCAVAIAPPEMYIDMAKREAEGSHIMLGAQNVDLNLSGAFTGETSAAMLKDIGAQYIIIGHSERRTYHKESDELIAKKFAVLKEQGLTPVLCIGETEAENEAGKTEEVCARQIDAVLKTQGAAAFEGAVIAYEPVWAIGTGKSATPAQAQAVHKFIRDHIAKVDANIAEQVIIQYGGSVNASNAAELFAQPDIDGALVGGASLKADAFAVIVKAAEAAKQA.

9-11 is a substrate binding site; the sequence is NWK. The Electrophile role is filled by H95. The active-site Proton acceptor is E167. Residues G173, S212, and 233-234 each bind substrate; that span reads GG.

The protein belongs to the triosephosphate isomerase family. As to quaternary structure, homodimer.

It localises to the cytoplasm. The catalysed reaction is D-glyceraldehyde 3-phosphate = dihydroxyacetone phosphate. It functions in the pathway carbohydrate biosynthesis; gluconeogenesis. It participates in carbohydrate degradation; glycolysis; D-glyceraldehyde 3-phosphate from glycerone phosphate: step 1/1. In terms of biological role, involved in the gluconeogenesis. Catalyzes stereospecifically the conversion of dihydroxyacetone phosphate (DHAP) to D-glyceraldehyde-3-phosphate (G3P). This is Triosephosphate isomerase from Escherichia fergusonii (strain ATCC 35469 / DSM 13698 / CCUG 18766 / IAM 14443 / JCM 21226 / LMG 7866 / NBRC 102419 / NCTC 12128 / CDC 0568-73).